The chain runs to 117 residues: Ig heavy chain V region 3 (117 aa).

The first 19 residues, 1–19 (MGWSCIILFLVATATGVHS), serve as a signal peptide directing secretion. Residues 20–49 (QVQLQQPGAELVRPGSSVKLSCKASGYTFT) form a framework-1 region. An intrachain disulfide couples Cys-41 to Cys-115. The interval 50-54 (SYWMD) is complementarity-determining-1. Positions 55 to 68 (WVKQRPGQGLEWIG) are framework-2. A complementarity-determining-2 region spans residues 69 to 85 (NIYPSDSETHYNQKFKD). The tract at residues 86–117 (KATLTVDKSSSTAYMQLSSLTSEDSAVYYCAR) is framework-3.

This chain is Ig heavy chain V region 3 (Ighv1-61), found in Mus musculus (Mouse).